A 479-amino-acid polypeptide reads, in one-letter code: Solute carrier family 7 member 13 (479 aa).

Topologically, residues 1-14 (MAMDIEKKIYLKRQ) are cytoplasmic. Residues 15-35 (LGYFWGTNFLIINIIGAGIFV) traverse the membrane as a helical segment. Topologically, residues 36 to 47 (SPKGVLQYSSMN) are extracellular. Residues 48–68 (VGVSLCVWVFCAVLSMTSTLC) traverse the membrane as a helical segment. The Cytoplasmic segment spans residues 69 to 89 (AAEIGITFPYTVAHYYFLKRC). The chain crosses the membrane as a helical span at residues 90 to 110 (FGPFVAFLRLWTSLFTGPGVL). Residues 111–129 (ASQALLLAEYGIQPFYPSC) lie on the Extracellular side of the membrane. Residues 130 to 150 (SAPAVPKKCLALAMLWIVGIL) traverse the membrane as a helical segment. Topologically, residues 151 to 165 (NSRGVKELSWLQTVS) are cytoplasmic. A helical membrane pass occupies residues 166–186 (MVLKMGILSFISLSGLFLLVT). At 187–208 (GRKENVRRLQNAFDAEFPEVSR) the chain is on the extracellular side. The chain crosses the membrane as a helical span at residues 209 to 229 (LIEAIFQGYFAFSGGGSFTYV). Over 230–242 (AGELKEPSKTIPR) the chain is Cytoplasmic. Residues 243 to 263 (CIFTALPLVTVVYLLANLSYL) form a helical membrane-spanning segment. Over 264 to 289 (TVLSPQELLSSDAVALTWTDRVIPQL) the chain is Extracellular. Residues 290–310 (TWSVPFAISASLFSNLVTSVF) form a helical membrane-spanning segment. The Cytoplasmic segment spans residues 311–338 (ETSRTSYIASRNGQLPLLCSTLNVHSSP). Residues 339–359 (FIAVLLDVSMGSIAIVLTNLI) traverse the membrane as a helical segment. Glu-360 is a topological domain (extracellular). Residues 361–381 (LINYLFFVFSIWTVLSVIGIL) form a helical membrane-spanning segment. Over 382-396 (KLRYQEPNLHRPYKV) the chain is Cytoplasmic. Residues 397–417 (FSPFLFITAAISLSMVLIPLI) form a helical membrane-spanning segment. At 418 to 423 (KSPKMQ) the chain is on the extracellular side. Residues 424–444 (YIYVFLFFLGGLLFYVPLIHF) traverse the membrane as a helical segment. Over 445 to 479 (KLKLIWFQKLTCYLQLLFNICIPDVSDEHVAEEES) the chain is Cytoplasmic.

Belongs to the amino acid-polyamine-organocation (APC) superfamily. As to quaternary structure, disulfide-linked heterodimer composed of the catalytic light subunit SLC7A13 and the heavy subunit SLC3A1.

It localises to the apical cell membrane. It carries out the reaction L-cystine(out) + L-aspartate(in) = L-cystine(in) + L-aspartate(out). The catalysed reaction is L-cystine(out) = L-cystine(in). It catalyses the reaction L-aspartate(in) + L-glutamate(out) = L-aspartate(out) + L-glutamate(in). The enzyme catalyses L-aspartate(in) + L-glutamine(out) = L-aspartate(out) + L-glutamine(in). It carries out the reaction L-aspartate(in) + L-methionine(out) = L-aspartate(out) + L-methionine(in). The catalysed reaction is L-leucine(out) + L-aspartate(in) = L-leucine(in) + L-aspartate(out). It catalyses the reaction L-valine(out) + L-aspartate(in) = L-valine(in) + L-aspartate(out). The enzyme catalyses L-aspartate(in) + L-phenylalanine(out) = L-aspartate(out) + L-phenylalanine(in). It carries out the reaction L-tyrosine(out) + L-aspartate(in) = L-tyrosine(in) + L-aspartate(out). The catalysed reaction is L-tryptophan(out) + L-aspartate(in) = L-tryptophan(in) + L-aspartate(out). In terms of biological role, associates with SLC3A1/rBAT to form a functional heterodimeric complex that transports anionic and neutral amino acids across the apical plasma membrane of renal epithelium. Preferentially mediates exchange transport, but can also operate via facilitated diffusion. May act as a major transporter for L-cystine in late proximal tubules, ensuring its reabsorption from the luminal fluid in exchange for cytosolic L-glutamate or L-aspartate. The protein is Solute carrier family 7 member 13 (Slc7a13) of Rattus norvegicus (Rat).